The sequence spans 149 residues: Lipoprotein signal peptidase (149 aa).

A run of 2 helical transmembrane segments spans residues 53 to 73 (MPGKSWLFFISALLVIMALVI) and 89 to 109 (GLIAGGALGNLIDRYFYGFVI). Residues D110 and D124 contribute to the active site. The helical transmembrane segment at 119–139 (VFNLADSAIVCGGILLLILVL) threads the bilayer.

Belongs to the peptidase A8 family.

It localises to the cell membrane. The catalysed reaction is Release of signal peptides from bacterial membrane prolipoproteins. Hydrolyzes -Xaa-Yaa-Zaa-|-(S,diacylglyceryl)Cys-, in which Xaa is hydrophobic (preferably Leu), and Yaa (Ala or Ser) and Zaa (Gly or Ala) have small, neutral side chains.. Its pathway is protein modification; lipoprotein biosynthesis (signal peptide cleavage). In terms of biological role, this protein specifically catalyzes the removal of signal peptides from prolipoproteins. The polypeptide is Lipoprotein signal peptidase (Syntrophomonas wolfei subsp. wolfei (strain DSM 2245B / Goettingen)).